The primary structure comprises 239 residues: Probable transcriptional regulatory protein BPUM_0743 (239 aa).

The protein belongs to the TACO1 family. YeeN subfamily.

The protein resides in the cytoplasm. In Bacillus pumilus (strain SAFR-032), this protein is Probable transcriptional regulatory protein BPUM_0743.